Here is a 711-residue protein sequence, read N- to C-terminus: BCLAF1 and THRAP3 family member 3 (711 aa).

Residues 1 to 15 (MARSRSRSPRWKHRS) show a composition bias toward basic residues. Disordered stretches follow at residues 1–42 (MARS…YRKD) and 48–67 (AWRM…PSRG). Phosphoserine is present on residues serine 15 and serine 17. Positions 48–57 (AWRMDSEKHG) are enriched in basic and acidic residues. Residues serine 78, serine 80, and serine 187 each carry the phosphoserine modification. Disordered stretches follow at residues 94–350 (KPHR…KDSI) and 371–404 (EKIK…PSPI). 6 stretches are compositionally biased toward basic and acidic residues: residues 163–197 (FRFE…DFET), 204–213 (RYPEDRDFRK), 220–242 (RPKD…KPEH), 296–311 (SDGR…DRKY), 318–349 (LNRE…KKDS), and 371–383 (EKIK…RKES). A Glycyl lysine isopeptide (Lys-Gly) (interchain with G-Cter in SUMO2) cross-link involves residue lysine 400. 2 positions are modified to phosphoserine: serine 402 and serine 578.

The protein belongs to the BCLAF1/THRAP3 family.

It is found in the mitochondrion. This Homo sapiens (Human) protein is BCLAF1 and THRAP3 family member 3.